The following is a 213-amino-acid chain: ATP synthase peripheral stalk subunit OSCP, mitochondrial (213 aa).

Residues 1–23 (MAALAVSGLSQQVRCFSTSVVRP) constitute a mitochondrion transit peptide. The short motif at 5–23 (AVSGLSQQVRCFSTSVVRP) is the SIFI-degron element. An N6-acetyllysine mark is found at Lys-54, Lys-60, Lys-70, and Lys-73. Position 90 is an N6-succinyllysine (Lys-90). Lys-100, Lys-158, and Lys-162 each carry N6-acetyllysine; alternate. N6-succinyllysine; alternate occurs at positions 100, 158, and 162. 3 positions are modified to N6-acetyllysine: Lys-172, Lys-176, and Lys-192. At Lys-199 the chain carries N6-succinyllysine.

The protein belongs to the ATPase delta chain family. In terms of assembly, component of the ATP synthase complex composed at least of ATP5F1A/subunit alpha, ATP5F1B/subunit beta, ATP5MC1/subunit c (homooctomer), MT-ATP6/subunit a, MT-ATP8/subunit 8, ATP5ME/subunit e, ATP5MF/subunit f, ATP5MG/subunit g, ATP5MK/subunit k, ATP5MJ/subunit j, ATP5F1C/subunit gamma, ATP5F1D/subunit delta, ATP5F1E/subunit epsilon, ATP5PF/subunit F6, ATP5PB/subunit b, ATP5PD/subunit d, ATP5PO/subunit OSCP. ATP synthase complex consists of a soluble F(1) head domain (subunits alpha(3) and beta(3)) - the catalytic core - and a membrane F(0) domain - the membrane proton channel (subunits c, a, 8, e, f, g, k and j). These two domains are linked by a central stalk (subunits gamma, delta, and epsilon) rotating inside the F1 region and a stationary peripheral stalk (subunits F6, b, d, and OSCP). Acetylation at Lys-162 decreases ATP production. Deacetylated by SIRT3. Post-translationally, in response to mitochondrial stress, the precursor protein is ubiquitinated by the SIFI complex in the cytoplasm before mitochondrial import, leading to its degradation. Within the SIFI complex, UBR4 initiates ubiquitin chain that are further elongated or branched by KCMF1.

Its subcellular location is the mitochondrion. It is found in the mitochondrion inner membrane. Its function is as follows. Subunit OSCP, of the mitochondrial membrane ATP synthase complex (F(1)F(0) ATP synthase or Complex V) that produces ATP from ADP in the presence of a proton gradient across the membrane which is generated by electron transport complexes of the respiratory chain. ATP synthase complex consist of a soluble F(1) head domain - the catalytic core - and a membrane F(1) domain - the membrane proton channel. These two domains are linked by a central stalk rotating inside the F(1) region and a stationary peripheral stalk. During catalysis, ATP synthesis in the catalytic domain of F(1) is coupled via a rotary mechanism of the central stalk subunits to proton translocation. In vivo, can only synthesize ATP although its ATP hydrolase activity can be activated artificially in vitro. Part of the complex F(0) domain. Part of the complex F(0) domain and the peripheric stalk, which acts as a stator to hold the catalytic alpha(3)beta(3) subcomplex and subunit a/ATP6 static relative to the rotary elements. This chain is ATP synthase peripheral stalk subunit OSCP, mitochondrial, found in Bos taurus (Bovine).